The primary structure comprises 688 residues: Lipase (688 aa).

Residues 1 to 35 (MKTRQNKYSIRKFSVGASSILIAALLFMGGGSAQA) form the signal peptide. Residues 31-309 (GSAQAAEQQQ…KSAKQKQYKN (279 aa)) are disordered. Residues 36 to 302 (AEQQQDKGTV…KNEDQTNKSA (267 aa)) constitute a propeptide, removed in mature form. Residues 45–54 (VENSTTQSIG) show a composition bias toward polar residues. Basic and acidic residues-rich tracts occupy residues 84–95 (ESLHNETPKNED) and 103–143 (SQND…KHAS). Composition is skewed to polar residues over residues 144 to 175 (ENNQTLHSKAAQSNEDVKTKPSQLDNTTAQQE) and 184 to 211 (KQDTQSSKTTDLLRATGQNQSKDSQSTE). A compositionally biased stretch (basic and acidic residues) spans 227-268 (KNDDDKVETFNLNSKEEPLKVDKQANPTTDKDKSSKNDKGSH). The span at 274–289 (LESNAVATTNKQSKQQ) shows a compositional bias: polar residues. Catalysis depends on S418, which acts as the Nucleophile. D609 functions as the Charge relay system in the catalytic mechanism. D647 contacts Ca(2+). Residue H648 is the Charge relay system of the active site. 3 residues coordinate Ca(2+): D650, D655, and D658.

This sequence belongs to the AB hydrolase superfamily. Lipase family.

It is found in the secreted. It carries out the reaction a triacylglycerol + H2O = a diacylglycerol + a fatty acid + H(+). This is Lipase (lip) from Staphylococcus epidermidis (strain ATCC 35984 / DSM 28319 / BCRC 17069 / CCUG 31568 / BM 3577 / RP62A).